A 178-amino-acid polypeptide reads, in one-letter code: Alkyl hydroperoxide reductase AhpD (178 aa).

The active-site Proton donor is the cysteine 131. The cysteines at positions 131 and 134 are disulfide-linked. Cysteine 134 functions as the Cysteine sulfenic acid (-SOH) intermediate in the catalytic mechanism.

It belongs to the AhpD family.

It carries out the reaction N(6)-[(R)-dihydrolipoyl]-L-lysyl-[lipoyl-carrier protein] + a hydroperoxide = N(6)-[(R)-lipoyl]-L-lysyl-[lipoyl-carrier protein] + an alcohol + H2O. Its function is as follows. Antioxidant protein with alkyl hydroperoxidase activity. Required for the reduction of the AhpC active site cysteine residues and for the regeneration of the AhpC enzyme activity. The chain is Alkyl hydroperoxide reductase AhpD from Methylocella silvestris (strain DSM 15510 / CIP 108128 / LMG 27833 / NCIMB 13906 / BL2).